We begin with the raw amino-acid sequence, 106 residues long: MGFFKKIKKAVKKVVKEVGKPIEKAGKEVGKAVGGALGAGKQEIIQQEAPAPVVAAPPPAQVVDVPEQDKAEGEDEAQTESARKKARAGGKKALSVARSSGGGINI.

Positions 48–106 (EAPAPVVAAPPPAQVVDVPEQDKAEGEDEAQTESARKKARAGGKKALSVARSSGGGINI) are disordered.

This sequence belongs to the T7likevirus protein 7.3 family.

The protein localises to the virion. Plays an essential role most probably in virion tail assembly. May form a scaffold around which gp11 and gp12 polymerize. Gets ejected from the infecting particle into the bacterial cell. This is Protein 7.3 (7.3) from Enterobacteria phage T3 (Bacteriophage T3).